We begin with the raw amino-acid sequence, 112 residues long: Nucleoid-associated protein CA_C0126 (112 aa).

The span at 93 to 102 shows a compositional bias: basic and acidic residues; that stretch reads EEETSGEMKK. Residues 93–112 form a disordered region; it reads EEETSGEMKKLTGGLNIPGL.

It belongs to the YbaB/EbfC family. In terms of assembly, homodimer.

Its subcellular location is the cytoplasm. It localises to the nucleoid. In terms of biological role, binds to DNA and alters its conformation. May be involved in regulation of gene expression, nucleoid organization and DNA protection. This is Nucleoid-associated protein CA_C0126 from Clostridium acetobutylicum (strain ATCC 824 / DSM 792 / JCM 1419 / IAM 19013 / LMG 5710 / NBRC 13948 / NRRL B-527 / VKM B-1787 / 2291 / W).